The following is a 194-amino-acid chain: MKTILSSETMDIPDGVAIKVNAKVIEVEGPRGKLTRDFKHLNLDFQLIKDQVTGKRQLKIDSWFGSRKTSASIRTALSHVDNLIAGVTQGFLYRMRFVYAHFPINASIDGNNKSIEIRNFLGEKKVRKVEMLDGVKIVRSEKVKDEIILEGNDIELVSRSCALINQKCHVKKKDIRKFLDGIYVSEKGKIAVEE.

T75 carries the post-translational modification Phosphothreonine.

The protein belongs to the universal ribosomal protein uL6 family.

The protein is Large ribosomal subunit protein uL6x (RPL9D) of Arabidopsis thaliana (Mouse-ear cress).